Reading from the N-terminus, the 251-residue chain is MCYIEITKDNIEDNHICCALSTKQYEHAVNEKKRWLKARMDEGLVFYRLHERAKVFIEYLPANEAWVPINAPNFMYINCLWVSGRYKNNGHAKRLLDKCIADAKACGMDGIIHIAGKKKLPYLSDKHFFEHMGFTLQDEAAPYFQLMALTWNGLADSPAFKSQVKSDSINEKGITIYYTAQCPFAVGMINDLRELTEKKGVQFQSIQLSSKEEAQKSPAIWTTFSVFFDGRFVTHEIMSINKFEKLLNTLA.

Residues 4–152 (IEITKDNIED…YFQLMALTWN (149 aa)) form the N-acetyltransferase domain.

It belongs to the acetyltransferase family.

This is an uncharacterized protein from Bacillus subtilis (strain 168).